The primary structure comprises 172 residues: Centrin-2 (172 aa).

Positions Met-1–Gln-31 are disordered. The residue at position 2 (Ala-2) is an N-acetylalanine. The segment at Ala-2–Leu-25 is required for self-assembly. Residue Ser-20 is modified to Phosphoserine. A Glycyl lysine isopeptide (Lys-Gly) (interchain with G-Cter in SUMO2) cross-link involves residue Lys-22. At Thr-26 the chain carries Phosphothreonine. 4 EF-hand domains span residues Glu-28–Glu-63, Pro-64–Glu-99, Asp-101–Asn-136, and Leu-137–Tyr-172. 5 residues coordinate Ca(2+): Asp-41, Asp-43, Thr-45, Thr-47, and Glu-52. The Ca(2+) site is built by Asp-150, Asp-152, Asp-154, Glu-156, and Glu-161.

The protein belongs to the centrin family. As to quaternary structure, monomer. Homooligomer. Interacts with CCP110, SFI1. Component of the XPC complex composed of XPC, RAD23B and CETN2. Component of the nuclear pore complex (NPC)-associated TREX-2 complex (transcription and export complex 2), composed of at least GANP, 2 copies of ENY2, PCID2, SEM1/DSS1, and either centrin CETN2 or centrin CETN3. The TREX-2 complex also associates with ALYREF/ALY and with the nucleoporin NUP153. Interacts with USP49. Forms a microtubule-associated complex with POC5, POC1B and FAM161A. Interacts with CCDC15.

It localises to the cytoplasm. Its subcellular location is the cytoskeleton. The protein resides in the microtubule organizing center. The protein localises to the centrosome. It is found in the centriole. It localises to the nucleus. Its subcellular location is the nucleus envelope. The protein resides in the nuclear pore complex. Functionally, plays a fundamental role in microtubule organizing center structure and function. Required for centriole duplication and correct spindle formation. Has a role in regulating cytokinesis and genome stability via cooperation with CALM1 and CCP110. In terms of biological role, involved in global genome nucleotide excision repair (GG-NER) by acting as component of the XPC complex. Cooperatively with RAD23B appears to stabilize XPC. In vitro, stimulates DNA binding of the XPC:RAD23B dimer. Its function is as follows. The XPC complex is proposed to represent the first factor bound at the sites of DNA damage and together with other core recognition factors, XPA, RPA and the TFIIH complex, is part of the pre-incision (or initial recognition) complex. The XPC complex recognizes a wide spectrum of damaged DNA characterized by distortions of the DNA helix such as single-stranded loops, mismatched bubbles or single-stranded overhangs. The orientation of XPC complex binding appears to be crucial for inducing a productive NER. XPC complex is proposed to recognize and to interact with unpaired bases on the undamaged DNA strand which is followed by recruitment of the TFIIH complex and subsequent scanning for lesions in the opposite strand in a 5'-to-3' direction by the NER machinery. Cyclobutane pyrimidine dimers (CPDs) which are formed upon UV-induced DNA damage esacpe detection by the XPC complex due to a low degree of structural perurbation. Instead they are detected by the UV-DDB complex which in turn recruits and cooperates with the XPC complex in the respective DNA repair. As a component of the TREX-2 complex, involved in the export of mRNAs to the cytoplasm through the nuclear pores. The chain is Centrin-2 (CETN2) from Bos taurus (Bovine).